The primary structure comprises 540 residues: Probable metabolite transport protein YFL040W (540 aa).

At 1–29 (MTAMKAIVWRLPKMPKIKITKTYEVTKIT) the chain is on the cytoplasmic side. Residues 30 to 50 (AILTLVGFIMGLEVPSLATFL) traverse the membrane as a helical segment. Topologically, residues 51–67 (TNKTFNEYFKYPTPLQQ) are extracellular. Residue Asn52 is glycosylated (N-linked (GlcNAc...) asparagine). The chain crosses the membrane as a helical span at residues 68–88 (GLLMGSTPLGGIMGCFICCIM). Residues 89 to 101 (NDRFSRIYQFQSG) are Cytoplasmic-facing. A helical transmembrane segment spans residues 102-122 (IIIWNIVTLLNFCIWDILGLL). The Extracellular segment spans residues 123–126 (ICRM). The chain crosses the membrane as a helical span at residues 127-147 (IKGMILGNFSILVASYANEVI). The Cytoplasmic segment spans residues 148–158 (PRGKRGSTMSY). The chain crosses the membrane as a helical span at residues 159-179 (IQLCLTIGILVMHYLCIALSL). The Extracellular portion of the chain corresponds to 180 to 187 (WDSHFAFR). A helical transmembrane segment spans residues 188 to 208 (IAWCIGIIPGLLFWMASYALP). The Cytoplasmic portion of the chain corresponds to 209–275 (ESYHWLVLHG…KKLPRGSFKP (67 aa)). A helical membrane pass occupies residues 276-296 (LILGMTLQLLVQFSGINIILG). At 297 to 313 (YITYICEIVGLEGNVKL) the chain is on the extracellular side. Residues 314–334 (FTSSIPYFINMVLSLLPITFI) form a helical membrane-spanning segment. Residues 335–341 (DYTSRKL) lie on the Cytoplasmic side of the membrane. A helical transmembrane segment spans residues 342 to 362 (ITLLGGFPISGLLITIGALFV). At 363–385 (KYGQDTKPIDGNRSLVWSIGENP) the chain is on the extracellular side. Residue Asn374 is glycosylated (N-linked (GlcNAc...) asparagine). A helical transmembrane segment spans residues 386–406 (FVGGWILTLCFLIVGIFAMSL). Residues 407-428 (SSIPWVYTNEMLPSRVKVKGFA) lie on the Cytoplasmic side of the membrane. A helical transmembrane segment spans residues 429 to 449 (ICVTFGWLGNFILTFLCPVMI). Over 450 to 455 (ERLKGT) the chain is Extracellular. The chain crosses the membrane as a helical span at residues 456-476 (TFIIFGSLTFLISLSVLIWFP). At 477–540 (ETKGMSIEDI…KLKSDEEMII (64 aa)) the chain is on the cytoplasmic side. A disordered region spans residues 499-540 (NLHGEKGIKTPDSNSNGGSTRSSQEGQLHKPIKLKSDEEMII). The span at 509 to 524 (PDSNSNGGSTRSSQEG) shows a compositional bias: polar residues.

This sequence belongs to the major facilitator superfamily. Sugar transporter (TC 2.A.1.1) family.

The protein resides in the membrane. In Saccharomyces cerevisiae (strain ATCC 204508 / S288c) (Baker's yeast), this protein is Probable metabolite transport protein YFL040W.